Reading from the N-terminus, the 28-residue chain is Dermaseptin-DI2 (28 aa).

In terms of tissue distribution, expressed by the skin glands.

It is found in the secreted. Its function is as follows. Has antibacterial activity against the Gram-positive bacteria S.aureus and E.faecalis, and the Gram-negative bacteria P.aeruginosa and E.coli. Has antiprotozoal activity against T.cruzi. Has antifungal activity against the yeasts C.tropicalis (MIC=10.9 uM), C.guilliermondii (MIC=21.8 uM), C.albicans (MIC=21.8 uM) and C.albicans ATCC 1023 (MIC=10.9 uM). Decreases viability of murine peritoneal cells. Fuses to, and disrupts liposomes. The sequence is that of Dermaseptin-DI2 from Phyllomedusa distincta (Monkey frog).